Consider the following 92-residue polypeptide: Small ribosomal subunit protein uS19c (92 aa).

The protein belongs to the universal ribosomal protein uS19 family.

Its subcellular location is the plastid. The protein resides in the chloroplast. In terms of biological role, protein S19 forms a complex with S13 that binds strongly to the 16S ribosomal RNA. The chain is Small ribosomal subunit protein uS19c from Draba nemorosa (Woodland whitlowgrass).